Consider the following 382-residue polypeptide: Nitric oxide reductase FlRd-NAD(+) reductase (382 aa).

The protein belongs to the FAD-dependent oxidoreductase family. FAD serves as cofactor.

It is found in the cytoplasm. The enzyme catalyses 2 reduced [nitric oxide reductase rubredoxin domain] + NAD(+) + H(+) = 2 oxidized [nitric oxide reductase rubredoxin domain] + NADH. It participates in nitrogen metabolism; nitric oxide reduction. One of at least two accessory proteins for anaerobic nitric oxide (NO) reductase. Reduces the rubredoxin moiety of NO reductase. This is Nitric oxide reductase FlRd-NAD(+) reductase from Vibrio vulnificus (strain YJ016).